The primary structure comprises 430 residues: MSFSVVILAAGQGTRMKSSLPKVLHTICGRPMIWHIIKEAQKISDDITVILYHQAEIIKEYIQKEFDGIRFVLQDHKNYPGTGGALRNIYFSNEKILVLNGDMPLIQAKTLKNFISIDADIVLSVIRMEDPCGYGRVIIKNDEVEYIVEQKDANEEELAVCNVNAGVYLFKKNLLEQFLPKLTNDNAQKEYYLTDIIALAKQHGFSIKPIFVPKNEFQGVNSKYDLANAEIVMQDRIKRHWMQQGVIMRLPQTIYIEVDVQFQGECELENGVVLRGKTLIENSHIKAHSVVENSTIRYSTIGPFARIRPQSMIQESHIGNFVEVKKSSLNGVKAGHLSYLGDATIDEGTNIGAGTITCNYDGKAKYQTIIGKNVFVGSDTQLIAPVKIEDDVLIAAGTTVTKDIPKGALAISRTPLKIVKDFYYKFFGKN.

The interval 1–223 (MSFSVVILAA…KNEFQGVNSK (223 aa)) is pyrophosphorylase. Residues 8-11 (LAAG), Lys22, and 81-82 (GT) contribute to the UDP-N-acetyl-alpha-D-glucosamine site. Residue Asp102 participates in Mg(2+) binding. Residues Gly135, Glu149, Asn164, and Asn221 each contribute to the UDP-N-acetyl-alpha-D-glucosamine site. Asn221 is a binding site for Mg(2+). Residues 224–244 (YDLANAEIVMQDRIKRHWMQQ) are linker. An N-acetyltransferase region spans residues 245–430 (GVIMRLPQTI…DFYYKFFGKN (186 aa)). Residues Arg308 and Lys325 each contribute to the UDP-N-acetyl-alpha-D-glucosamine site. Residue His336 is the Proton acceptor of the active site. Tyr339 and Asn350 together coordinate UDP-N-acetyl-alpha-D-glucosamine. Acetyl-CoA contacts are provided by residues Ala353, 359 to 360 (NY), Ser378, Ala396, and Arg413.

This sequence in the N-terminal section; belongs to the N-acetylglucosamine-1-phosphate uridyltransferase family. The protein in the C-terminal section; belongs to the transferase hexapeptide repeat family. As to quaternary structure, homotrimer. The cofactor is Mg(2+).

It is found in the cytoplasm. It carries out the reaction alpha-D-glucosamine 1-phosphate + acetyl-CoA = N-acetyl-alpha-D-glucosamine 1-phosphate + CoA + H(+). The enzyme catalyses N-acetyl-alpha-D-glucosamine 1-phosphate + UTP + H(+) = UDP-N-acetyl-alpha-D-glucosamine + diphosphate. The protein operates within nucleotide-sugar biosynthesis; UDP-N-acetyl-alpha-D-glucosamine biosynthesis; N-acetyl-alpha-D-glucosamine 1-phosphate from alpha-D-glucosamine 6-phosphate (route II): step 2/2. Its pathway is nucleotide-sugar biosynthesis; UDP-N-acetyl-alpha-D-glucosamine biosynthesis; UDP-N-acetyl-alpha-D-glucosamine from N-acetyl-alpha-D-glucosamine 1-phosphate: step 1/1. It participates in bacterial outer membrane biogenesis; LPS lipid A biosynthesis. In terms of biological role, catalyzes the last two sequential reactions in the de novo biosynthetic pathway for UDP-N-acetylglucosamine (UDP-GlcNAc). The C-terminal domain catalyzes the transfer of acetyl group from acetyl coenzyme A to glucosamine-1-phosphate (GlcN-1-P) to produce N-acetylglucosamine-1-phosphate (GlcNAc-1-P), which is converted into UDP-GlcNAc by the transfer of uridine 5-monophosphate (from uridine 5-triphosphate), a reaction catalyzed by the N-terminal domain. The protein is Bifunctional protein GlmU of Nitratiruptor sp. (strain SB155-2).